A 63-amino-acid polypeptide reads, in one-letter code: Alpha-toxin CsE5 (63 aa).

Positions 2 to 61 constitute an LCN-type CS-alpha/beta domain; it reads KDGYPVDSGNCKYECLKDDYCNDLCLERKADKGYCYWGKVSCYCYGLPDNSPTKTSGKCN. Disulfide bonds link cysteine 12–cysteine 60, cysteine 16–cysteine 36, cysteine 22–cysteine 43, and cysteine 26–cysteine 45.

The protein belongs to the long (4 C-C) scorpion toxin superfamily. Sodium channel inhibitor family. Alpha subfamily. In terms of tissue distribution, expressed by the venom gland.

The protein localises to the secreted. Functionally, alpha toxins bind voltage-independently at site-3 of sodium channels (Nav) and inhibit the inactivation of the activated channels, thereby blocking neuronal transmission. This is Alpha-toxin CsE5 from Centruroides sculpturatus (Arizona bark scorpion).